Reading from the N-terminus, the 361-residue chain is Peptide chain release factor 1 (361 aa).

Residue glutamine 235 is modified to N5-methylglutamine.

Belongs to the prokaryotic/mitochondrial release factor family. In terms of processing, methylated by PrmC. Methylation increases the termination efficiency of RF1.

It is found in the cytoplasm. Peptide chain release factor 1 directs the termination of translation in response to the peptide chain termination codons UAG and UAA. The sequence is that of Peptide chain release factor 1 from Rhodopseudomonas palustris (strain BisB18).